Consider the following 245-residue polypeptide: 4-hydroxy-tetrahydrodipicolinate reductase (245 aa).

Residues 7-12, 75-77, and 102-105 contribute to the NAD(+) site; these read GARGKV, GTT, and APNF. Residue H132 is the Proton donor/acceptor of the active site. H133 contributes to the (S)-2,3,4,5-tetrahydrodipicolinate binding site. Residue K136 is the Proton donor of the active site. Residue 142–143 participates in (S)-2,3,4,5-tetrahydrodipicolinate binding; sequence GT.

It belongs to the DapB family.

The protein localises to the cytoplasm. The catalysed reaction is (S)-2,3,4,5-tetrahydrodipicolinate + NAD(+) + H2O = (2S,4S)-4-hydroxy-2,3,4,5-tetrahydrodipicolinate + NADH + H(+). It catalyses the reaction (S)-2,3,4,5-tetrahydrodipicolinate + NADP(+) + H2O = (2S,4S)-4-hydroxy-2,3,4,5-tetrahydrodipicolinate + NADPH + H(+). The protein operates within amino-acid biosynthesis; L-lysine biosynthesis via DAP pathway; (S)-tetrahydrodipicolinate from L-aspartate: step 4/4. Functionally, catalyzes the conversion of 4-hydroxy-tetrahydrodipicolinate (HTPA) to tetrahydrodipicolinate. The sequence is that of 4-hydroxy-tetrahydrodipicolinate reductase from Mycolicibacterium smegmatis (strain ATCC 700084 / mc(2)155) (Mycobacterium smegmatis).